We begin with the raw amino-acid sequence, 837 residues long: Striatin-interacting protein 1 (837 aa).

Methionine 1 carries the N-acetylmethionine modification. Positions 1-67 (MEPAAGTPGP…DSEGYSESPD (67 aa)) are disordered. A compositionally biased stretch (pro residues) spans 18-35 (PQPPPPPPPATAQPPPGA). A compositionally biased stretch (basic and acidic residues) spans 47 to 60 (KAREFNRNQRKDSE). 3 positions are modified to phosphoserine: serine 59, serine 335, and serine 339. The disordered stretch occupies residues 336-423 (PPASASDLIE…DRLTCPKGLP (88 aa)). Positions 356 to 377 (KALIKQDNLDAFNERDPYKADD) are enriched in basic and acidic residues. Positions 378 to 391 (SREEEEENDDDNSL) are enriched in acidic residues. Phosphoserine is present on serine 788. The interval 796–837 (DNCLQSVLGQRVDLPEDFQMNYDLWLEREVFSKPISWEELLQ) is required for STRIPAK core complex formation.

The protein belongs to the STRIP family. Part of the core of STRIPAK complexes composed of PP2A catalytic and scaffolding subunits, the striatins (PP2A regulatory subunits), the striatin-associated proteins MOB4, STRIP1 and STRIP2, PDCD10 and members of the STE20 kinases, such as STK24 and STK26. The STRIPAK complex can be extended by adapter proteins such as SLMAP:SIKE1, CTTNBP2 or CTTNBP2NL. Interacts with CDC42BPB. Interacts with CTTNBP2NL.

The protein resides in the cytoplasm. In terms of biological role, plays a role in the regulation of cell morphology and cytoskeletal organization. Required in the cortical actin filament dynamics and cell shape. Part of the striatin-interacting phosphatase and kinase (STRIPAK) complexes. STRIPAK complexes have critical roles in protein (de)phosphorylation and are regulators of multiple signaling pathways including Hippo, MAPK, nuclear receptor and cytoskeleton remodeling. Different types of STRIPAK complexes are involved in a variety of biological processes such as cell growth, differentiation, apoptosis, metabolism and immune regulation. In Bos taurus (Bovine), this protein is Striatin-interacting protein 1 (STRIP1).